An 86-amino-acid polypeptide reads, in one-letter code: MEKNKTRIGHVISDRMEKTIVVGIDVAKRHPLYKKTYRRTMKYLVHDEKNEAKIGDMIEIVKCRPISKGKYWRLNRIITKGHIVAA.

Belongs to the universal ribosomal protein uS17 family. Part of the 30S ribosomal subunit.

Functionally, one of the primary rRNA binding proteins, it binds specifically to the 5'-end of 16S ribosomal RNA. The polypeptide is Small ribosomal subunit protein uS17 (Dehalococcoides mccartyi (strain ATCC BAA-2266 / KCTC 15142 / 195) (Dehalococcoides ethenogenes (strain 195))).